The sequence spans 208 residues: Probable nicotinate-nucleotide adenylyltransferase (208 aa).

The protein belongs to the NadD family.

The catalysed reaction is nicotinate beta-D-ribonucleotide + ATP + H(+) = deamido-NAD(+) + diphosphate. It participates in cofactor biosynthesis; NAD(+) biosynthesis; deamido-NAD(+) from nicotinate D-ribonucleotide: step 1/1. Functionally, catalyzes the reversible adenylation of nicotinate mononucleotide (NaMN) to nicotinic acid adenine dinucleotide (NaAD). This is Probable nicotinate-nucleotide adenylyltransferase from Symbiobacterium thermophilum (strain DSM 24528 / JCM 14929 / IAM 14863 / T).